Here is a 1465-residue protein sequence, read N- to C-terminus: DNA polymerase III PolC-type (1465 aa).

Residues 427 to 583 (YVVFDVETTG…YDAEATGRLL (157 aa)) form the Exonuclease domain.

It belongs to the DNA polymerase type-C family. PolC subfamily.

It localises to the cytoplasm. The enzyme catalyses DNA(n) + a 2'-deoxyribonucleoside 5'-triphosphate = DNA(n+1) + diphosphate. In terms of biological role, required for replicative DNA synthesis. This DNA polymerase also exhibits 3' to 5' exonuclease activity. This is DNA polymerase III PolC-type from Streptococcus pyogenes serotype M5 (strain Manfredo).